We begin with the raw amino-acid sequence, 479 residues long: Adenosylhomocysteinase (479 aa).

Residues Thr-65, Asp-145, and Glu-205 each contribute to the substrate site. 206-208 (TTT) lines the NAD(+) pocket. 2 residues coordinate substrate: Lys-235 and Asp-239. NAD(+) contacts are provided by residues Asn-240, 269 to 274 (GYGDVG), Glu-292, Asn-327, 348 to 350 (IGH), and Asn-393.

Belongs to the adenosylhomocysteinase family. The cofactor is NAD(+).

It is found in the cytoplasm. The enzyme catalyses S-adenosyl-L-homocysteine + H2O = L-homocysteine + adenosine. It functions in the pathway amino-acid biosynthesis; L-homocysteine biosynthesis; L-homocysteine from S-adenosyl-L-homocysteine: step 1/1. Functionally, may play a key role in the regulation of the intracellular concentration of adenosylhomocysteine. The sequence is that of Adenosylhomocysteinase from Herminiimonas arsenicoxydans.